A 235-amino-acid chain; its full sequence is Chalcone--flavanone isomerase 2 (235 aa).

The substrate site is built by T50 and S192.

Belongs to the chalcone isomerase family.

The enzyme catalyses a chalcone = a flavanone.. Its pathway is secondary metabolite biosynthesis; flavonoid biosynthesis. Its function is as follows. Catalyzes the intramolecular cyclization of bicyclic chalcones into tricyclic (S)-flavanones. Responsible for the isomerization of 4,2',4',6'-tetrahydroxychalcone (also termed chalcone) into naringenin. In Chrysanthemum morifolium (Florist's daisy), this protein is Chalcone--flavanone isomerase 2 (CHI2).